A 476-amino-acid chain; its full sequence is MESLKRFLCSIALLLISLLLPSSLAQQQQHESIRTMEDFSGYPIHEPGQFGSINLASSLSVDAPGLQNQIDELSSFSDAPSPSVTRVLYTDKDVSARRYVKNLMALAGLTVREDAVGNIFGKWDGLEPNLPAVATGSHIDAIPYSGKYDGVVGVLGAIEAINVLKRSGFKPKRSLEIILFTSEEPTRFGISCLGSRLLAGSKELAEALKTTVVDGQNVSFIEAARSAGYAEDKDDDLSSVFLKKGSYFAFLELHIEQGPILEDEGLDIGVVTAIAAPASLKVEFEGNGGHAGAVLMPYRNDAGLAAAELALAVEKHVLESESIDTVGTVGILELHPGAINSIPSKSHLEIDTRDIDEARRNTVIKKIQESANTIAKKRKVKLSEFKIVNQDPPALSDKLVIKKMAEAATELNLSHKMMISRAYHDSLFMARISPMGMIFIPCYKGYSHKPEEYSSPEDMANGVKVLSLTLAKLSLD.

Residues 1–25 form the signal peptide; the sequence is MESLKRFLCSIALLLISLLLPSSLA. Mn(2+) contacts are provided by His138, Asp149, Glu184, and His254. Residues 183–184, 254–257, His290, Asn340, Arg353, 423–424, and His448 each bind substrate; these read EE, HIEQ, and YH. The tract at residues 276-391 is involved in dimerization; sequence APASLKVEFE…LSEFKIVNQD (116 aa). His448 contributes to the Mn(2+) binding site.

It belongs to the peptidase M20 family. In terms of assembly, homodimer. Requires Mn(2+) as cofactor. The cofactor is Ni(2+). Co(2+) serves as cofactor.

It localises to the endoplasmic reticulum. It catalyses the reaction (S)-ureidoglycolate + H2O + 2 H(+) = glyoxylate + 2 NH4(+) + CO2. The protein operates within nitrogen metabolism; (S)-allantoin degradation; glyoxylate from (S)-ureidoglycolate: step 1/1. Its function is as follows. Involved in the catabolism of purine nucleotides. Can use (S)-ureidoglycolate as substrate, but not (R)-ureidoglycolate or allantoate. The sequential activity of AAH, UGLYAH and UAH allows a complete purine breakdown without the intermediate generation of urea. This is Ureidoglycolate hydrolase from Arabidopsis thaliana (Mouse-ear cress).